A 247-amino-acid chain; its full sequence is ATP synthase subunit a, chloroplastic (247 aa).

5 helical membrane-spanning segments follow: residues 38–58 (QVLI…SIAV), 95–115 (VPFI…GALL), 134–154 (INTT…AGLS), 199–219 (LVVV…VMFL), and 220–240 (GLFT…AYIG).

Belongs to the ATPase A chain family. As to quaternary structure, F-type ATPases have 2 components, CF(1) - the catalytic core - and CF(0) - the membrane proton channel. CF(1) has five subunits: alpha(3), beta(3), gamma(1), delta(1), epsilon(1). CF(0) has four main subunits: a, b, b' and c.

Its subcellular location is the plastid. The protein localises to the chloroplast thylakoid membrane. In terms of biological role, key component of the proton channel; it plays a direct role in the translocation of protons across the membrane. In Oenothera argillicola (Appalachian evening primrose), this protein is ATP synthase subunit a, chloroplastic.